We begin with the raw amino-acid sequence, 424 residues long: Adenylosuccinate synthetase (424 aa).

GTP contacts are provided by residues 12-18 and 40-42; these read GDEGKGK and GHT. Residue aspartate 13 is the Proton acceptor of the active site. Aspartate 13 and glycine 40 together coordinate Mg(2+). Residues 13-16, 38-41, threonine 130, arginine 144, asparagine 220, threonine 235, and arginine 299 each bind IMP; these read DEGK and NAGH. The active-site Proton donor is the histidine 41. 295 to 301 contacts substrate; that stretch reads VTTGRRR. Residues arginine 301, 327 to 329, and 412 to 414 contribute to the GTP site; these read KLD and GTG.

The protein belongs to the adenylosuccinate synthetase family. As to quaternary structure, homodimer. Requires Mg(2+) as cofactor.

It is found in the cytoplasm. It carries out the reaction IMP + L-aspartate + GTP = N(6)-(1,2-dicarboxyethyl)-AMP + GDP + phosphate + 2 H(+). It functions in the pathway purine metabolism; AMP biosynthesis via de novo pathway; AMP from IMP: step 1/2. Plays an important role in the de novo pathway and in the salvage pathway of purine nucleotide biosynthesis. Catalyzes the first committed step in the biosynthesis of AMP from IMP. The chain is Adenylosuccinate synthetase from Aspergillus flavus (strain ATCC 200026 / FGSC A1120 / IAM 13836 / NRRL 3357 / JCM 12722 / SRRC 167).